The following is a 1959-amino-acid chain: Zinc finger protein hangover (1959 aa).

One can recognise a ZAD domain in the interval 79-155 (NCCRLCIAPQ…FSSQAKQRQW (77 aa)). Zn(2+) contacts are provided by C81, C84, C128, and C131. A disordered region spans residues 178 to 208 (GFFDQHLHQQQQHHQHLENELEAEKEKATPT). Residues 192 to 205 (QHLENELEAEKEKA) are compositionally biased toward basic and acidic residues. S228 carries the phosphoserine modification. T246 carries the phosphothreonine modification. The C2H2-type 1 zinc-finger motif lies at 318 to 341 (ASCRACSLQFSTRANARRHERNLH). The C2H2-type 2; degenerate zinc finger occupies 447–469 (MTCRCCNKYFSTYKNFMAHVRKK). The C2H2-type 3 zinc-finger motif lies at 581–604 (YECKLCPKGFRTKHEFRTHVYDKH). Residues 674–762 (AVSDNASTTG…ANRDASAPKS (89 aa)) form a disordered region. Positions 677-693 (DNASTTGSGMARSNSME) are enriched in polar residues. Residue S680 is modified to Phosphoserine. Composition is skewed to low complexity over residues 716–727 (SSSAAPPLTSTP) and 741–759 (TSAS…DASA). C2H2-type zinc fingers lie at residues 770-793 (QVCP…ESKH) and 801-824 (YKCV…INVH). S832, S894, S895, S898, and S899 each carry phosphoserine. A C2H2-type 6 zinc finger spans residues 908-930 (KECPICNAVFSNNIGLSNHMRSH). The segment at 960-991 (TDSELGVGGTMSESAPATPANVPPAMANQTPQ) is disordered. C2H2-type zinc fingers lie at residues 1011 to 1034 (MRCR…LTDH), 1042 to 1065 (IKCK…FKVH), 1078 to 1101 (FECD…RSVH), 1154 to 1176 (YQCK…INSH), and 1184 to 1207 (YSCK…YKKH). Residues 1233–1253 (TPTCNRKPITSTGAHQQQDGQ) show a composition bias toward polar residues. A disordered region spans residues 1233 to 1301 (TPTCNRKPIT…GNGTTVGVAS (69 aa)). The span at 1255–1267 (HSHHTAKRTIFRH) shows a compositional bias: basic residues. A compositionally biased stretch (acidic residues) spans 1271–1283 (DDDDEEDDDEQQQ). 2 C2H2-type zinc fingers span residues 1318–1340 (VACT…IQKH) and 1375–1397 (YACD…RKWH). Residues 1445–1467 (QQSLNNSCNSSMNHNNNSSSNRS) are compositionally biased toward low complexity. A disordered region spans residues 1445–1471 (QQSLNNSCNSSMNHNNNSSSNRSKSMK). 2 consecutive C2H2-type zinc fingers follow at residues 1476 to 1499 (LKCE…YELH) and 1552 to 1574 (WGCD…INNH). Positions 1627 to 1865 (AAGATTTDKL…STGERRKKAV (239 aa)) are disordered. Positions 1639-1695 (PDEEDSDDLDEDSSGDDDDSSGTGDDDDDDDSDDDEDGEGEDEDEEGDGGEGEDEEG) are enriched in acidic residues. The span at 1697–1715 (QPPAQLLPQQQHKTDLNLN) shows a compositional bias: low complexity. 2 stretches are compositionally biased toward acidic residues: residues 1716-1758 (QDDD…EEPE) and 1782-1829 (SDDE…EDEP). The span at 1833–1851 (STASFSESESSTTTTSNSH) shows a compositional bias: low complexity. A C2H2-type 16 zinc finger spans residues 1873–1895 (FTCDLCQLCFDSQELLQSHIKSH). The tract at residues 1933 to 1959 (PDSKSAVLANNNNSKTSSKTVAAGATN) is disordered. The segment covering 1942-1952 (NNNNSKTSSKT) has biased composition (low complexity).

In terms of tissue distribution, expressed ubiquitously in the nervous system, in neurons not glia.

The protein localises to the nucleus. Its function is as follows. Required for normal development of ethanol tolerance. Relies on two distinct molecular pathways: a cellular stress pathway defined by hang, and a parallel pathway requiring octopamine. The polypeptide is Zinc finger protein hangover (hang) (Drosophila melanogaster (Fruit fly)).